A 200-amino-acid chain; its full sequence is Small ribosomal subunit protein eS8A (200 aa).

The disordered stretch occupies residues 1–31 (MGISRDSRHKRSATGAKRAQFRKKRKFELGR). Thr-62 is subject to Phosphothreonine. Phosphoserine is present on residues Ser-66, Ser-69, Ser-73, and Ser-86. A Phosphothreonine modification is found at Thr-107. Residues Ser-154, Ser-155, Ser-158, and Ser-161 each carry the phosphoserine modification.

Belongs to the eukaryotic ribosomal protein eS8 family. As to quaternary structure, component of the small ribosomal subunit (SSU). Mature yeast ribosomes consist of a small (40S) and a large (60S) subunit. The 40S small subunit contains 1 molecule of ribosomal RNA (18S rRNA) and 33 different proteins (encoded by 57 genes). The large 60S subunit contains 3 rRNA molecules (25S, 5.8S and 5S rRNA) and 46 different proteins (encoded by 81 genes).

The protein resides in the cytoplasm. In terms of biological role, component of the ribosome, a large ribonucleoprotein complex responsible for the synthesis of proteins in the cell. The small ribosomal subunit (SSU) binds messenger RNAs (mRNAs) and translates the encoded message by selecting cognate aminoacyl-transfer RNA (tRNA) molecules. The large subunit (LSU) contains the ribosomal catalytic site termed the peptidyl transferase center (PTC), which catalyzes the formation of peptide bonds, thereby polymerizing the amino acids delivered by tRNAs into a polypeptide chain. The nascent polypeptides leave the ribosome through a tunnel in the LSU and interact with protein factors that function in enzymatic processing, targeting, and the membrane insertion of nascent chains at the exit of the ribosomal tunnel. In Saccharomyces cerevisiae (strain ATCC 204508 / S288c) (Baker's yeast), this protein is Small ribosomal subunit protein eS8A.